Consider the following 132-residue polypeptide: Intraflagellar transport protein 20 homolog (132 aa).

Residues 70-132 (MKAIGARNLL…EFIDQFIFQK (63 aa)) form an IFT57-binding region. A coiled-coil region spans residues 74–116 (GARNLLKSIAKQREAQQQQLQALIAEKKTQLERYRVEYEALCK).

Component of the IFT complex B, at least composed of IFT20, IFT22, IFT25, IFT27, IFT46, IFT52, TRAF3IP1/IFT54, IFT57, IFT74, IFT80, IFT81, and IFT88. Interacts directly with IFT57 and KIF3B/Kinesin II subunit. Interacts with IFT88. Interacts with CEP83. Interacts with SPEF2 (via C-terminus). Interacts with CBL and CBLB. Interacts with TRIP11. Interacts with TTC21A. Interacts with SPATA1. Interacts with USH1G. Interacts with CCDC146. Interacts with CEP78; regulating IFT20 stability and localization. As to expression, expressed predominantly in the testis (at protein level). Expressed in kidney and retina. Expression is up-regulated during spermiogenesis.

The protein localises to the golgi apparatus. Its subcellular location is the cis-Golgi network. The protein resides in the cytoplasm. It is found in the cytoskeleton. It localises to the microtubule organizing center. The protein localises to the centrosome. Its subcellular location is the centriole. The protein resides in the cilium basal body. It is found in the cell projection. It localises to the cilium. The protein localises to the cytoplasmic vesicle. Its subcellular location is the secretory vesicle. The protein resides in the acrosome. In terms of biological role, part of intraflagellar transport (IFT) particles involved in ciliary process assembly. May play a role in the trafficking of ciliary membrane proteins from the Golgi complex to the cilium. Regulates the ciliary platelet-derived growth factor receptor-alpha (PDGFRA) signaling pathway. Required for protein stability of E3 ubiquitin ligases CBL and CBLB that mediate ubiquitination and internalization of PDGFRA for proper feedback inhibition of PDGFRA signaling. Essential for male fertility. Plays an important role in spermatogenesis, particularly spermiogenesis, when germ cells form flagella. May play a role in the transport of flagellar proteins ODF2 and SPAG16 to build sperm flagella and in the removal of redundant sperm cytoplasm. Also involved in autophagy since it is required for trafficking of ATG16L and the expansion of the autophagic compartment. The protein is Intraflagellar transport protein 20 homolog (Ift20) of Mus musculus (Mouse).